Here is a 137-residue protein sequence, read N- to C-terminus: Phosphoribosyl-AMP cyclohydrolase (137 aa).

Asp83 serves as a coordination point for Mg(2+). Cys84 provides a ligand contact to Zn(2+). Residues Asp85 and Asp87 each contribute to the Mg(2+) site. Residues Cys101 and Cys108 each coordinate Zn(2+).

This sequence belongs to the PRA-CH family. As to quaternary structure, homodimer. Mg(2+) is required as a cofactor. It depends on Zn(2+) as a cofactor.

The protein resides in the cytoplasm. The catalysed reaction is 1-(5-phospho-beta-D-ribosyl)-5'-AMP + H2O = 1-(5-phospho-beta-D-ribosyl)-5-[(5-phospho-beta-D-ribosylamino)methylideneamino]imidazole-4-carboxamide. The protein operates within amino-acid biosynthesis; L-histidine biosynthesis; L-histidine from 5-phospho-alpha-D-ribose 1-diphosphate: step 3/9. Its function is as follows. Catalyzes the hydrolysis of the adenine ring of phosphoribosyl-AMP. The protein is Phosphoribosyl-AMP cyclohydrolase of Burkholderia mallei (strain ATCC 23344).